We begin with the raw amino-acid sequence, 336 residues long: Flavonoid 6-O-methyltransferase 4 (336 aa).

S-adenosyl-L-methionine contacts are provided by tyrosine 140 and aspartate 203. The active-site Proton acceptor is the histidine 241.

This sequence belongs to the class I-like SAM-binding methyltransferase superfamily. Cation-independent O-methyltransferase family. As to quaternary structure, homodimer. In terms of tissue distribution, expressed in leaves.

It carries out the reaction ladanein + S-adenosyl-L-methionine = salvigenin + S-adenosyl-L-homocysteine + H(+). The catalysed reaction is scutellarein 7-methyl ether + S-adenosyl-L-methionine = cirsimaritin + S-adenosyl-L-homocysteine + H(+). It functions in the pathway flavonoid metabolism. Its function is as follows. Flavonoid 6-O-methyltransferase involved in the biosynthesis of polymethoxylated flavonoids natural products such as nevadensin and salvigenin (SALV), aroma compounds which contribute to the flavor of sweet basil, and exhibit pharmacological activities such as anti-allergic, anti-oxidant, antibacterial, anti-proliferative, and anti-inflammatory effects. Catalyzes S-adenosylmethionine-dependent regioselective 6-O-methylation of flavonoids; active on various hydroxylated flavonoid substrates, including scutellarein-7-methyl ether (SCU7Me) and ladanein (LAD). In Ocimum basilicum (Sweet basil), this protein is Flavonoid 6-O-methyltransferase 4.